Reading from the N-terminus, the 293-residue chain is Ribosomal protein L11 methyltransferase (293 aa).

4 residues coordinate S-adenosyl-L-methionine: threonine 145, glycine 166, aspartate 188, and asparagine 230.

Belongs to the methyltransferase superfamily. PrmA family.

It is found in the cytoplasm. It catalyses the reaction L-lysyl-[protein] + 3 S-adenosyl-L-methionine = N(6),N(6),N(6)-trimethyl-L-lysyl-[protein] + 3 S-adenosyl-L-homocysteine + 3 H(+). Its function is as follows. Methylates ribosomal protein L11. The chain is Ribosomal protein L11 methyltransferase from Actinobacillus succinogenes (strain ATCC 55618 / DSM 22257 / CCUG 43843 / 130Z).